Consider the following 306-residue polypeptide: Methionyl-tRNA formyltransferase (306 aa).

110 to 113 is a (6S)-5,6,7,8-tetrahydrofolate binding site; the sequence is SLLP.

The protein belongs to the Fmt family.

It catalyses the reaction L-methionyl-tRNA(fMet) + (6R)-10-formyltetrahydrofolate = N-formyl-L-methionyl-tRNA(fMet) + (6S)-5,6,7,8-tetrahydrofolate + H(+). Functionally, attaches a formyl group to the free amino group of methionyl-tRNA(fMet). The formyl group appears to play a dual role in the initiator identity of N-formylmethionyl-tRNA by promoting its recognition by IF2 and preventing the misappropriation of this tRNA by the elongation apparatus. This Brucella melitensis biotype 2 (strain ATCC 23457) protein is Methionyl-tRNA formyltransferase.